Consider the following 199-residue polypeptide: ATP-dependent Clp protease proteolytic subunit (199 aa).

Residue S99 is the Nucleophile of the active site. H124 is a catalytic residue.

Belongs to the peptidase S14 family. As to quaternary structure, fourteen ClpP subunits assemble into 2 heptameric rings which stack back to back to give a disk-like structure with a central cavity, resembling the structure of eukaryotic proteasomes.

The protein localises to the cytoplasm. It catalyses the reaction Hydrolysis of proteins to small peptides in the presence of ATP and magnesium. alpha-casein is the usual test substrate. In the absence of ATP, only oligopeptides shorter than five residues are hydrolyzed (such as succinyl-Leu-Tyr-|-NHMec, and Leu-Tyr-Leu-|-Tyr-Trp, in which cleavage of the -Tyr-|-Leu- and -Tyr-|-Trp bonds also occurs).. Cleaves peptides in various proteins in a process that requires ATP hydrolysis. Has a chymotrypsin-like activity. Plays a major role in the degradation of misfolded proteins. In Lactococcus lactis subsp. cremoris (strain SK11), this protein is ATP-dependent Clp protease proteolytic subunit.